The sequence spans 331 residues: Eukaryotic translation initiation factor 3 subunit I (331 aa).

WD repeat units lie at residues 8-47 (LHER…RIGS), 49-88 (QCGG…QLDS), 142-181 (SPQC…LIKT), 184-223 (DHNK…LLRT), and 281-320 (GHIG…FEFD).

It belongs to the eIF-3 subunit I family. Component of the eukaryotic translation initiation factor 3 (eIF-3) complex.

Its subcellular location is the cytoplasm. Functionally, component of the eukaryotic translation initiation factor 3 (eIF-3) complex, which is involved in protein synthesis of a specialized repertoire of mRNAs and, together with other initiation factors, stimulates binding of mRNA and methionyl-tRNAi to the 40S ribosome. The eIF-3 complex specifically targets and initiates translation of a subset of mRNAs involved in cell proliferation. The chain is Eukaryotic translation initiation factor 3 subunit I (eif3I) from Dictyostelium discoideum (Social amoeba).